The sequence spans 84 residues: Metallothionein type 2b (84 aa).

It belongs to the metallothionein superfamily. Type 15 family. In terms of tissue distribution, expressed in leaves, stems and roots.

It localises to the cytoplasm. It is found in the nucleus. In terms of biological role, metallothioneins have a high content of cysteine residues that bind various heavy metals. Probably involved in maintaining homeostasis of essential transition metals and detoxification of toxic metals. Increases cadmium and zinc tolerance when expressed in heterologous systems. Metal chelator binding 6 cadmium or 5 zinc atoms per protein. This is Metallothionein type 2b from Colocasia esculenta (Wild taro).